The primary structure comprises 468 residues: Phosphatidylinositol-binding clathrin assembly protein LAP (468 aa).

An ENTH domain is found at 16–158; the sequence is RHSLAGQGLA…LSYRAMAFDF (143 aa). Positions 438–468 are disordered; it reads NAGDGTAKYDGGAGSSPFDWGATDDDGGAAQ. A compositionally biased stretch (acidic residues) spans 459 to 468; sequence ATDDDGGAAQ.

Belongs to the PICALM/SNAP91 family. Binds clathrin and phosphatidylinositol 4,5-bisphosphate. In terms of tissue distribution, in embryos, expression is seen in central and peripheral nervous systems (brain and ventral nerve cord) and Garland cells. Coexpressed with clathrin at presynaptic boutons of neuromuscular junctions.

It is found in the membrane. Its subcellular location is the clathrin-coated pit. It localises to the golgi apparatus. The protein localises to the cytoplasmic vesicle. The protein resides in the clathrin-coated vesicle. Its function is as follows. Assembly protein recruiting clathrin and adaptor protein complex 2 (AP2) to cell membranes at sites of coated-pit formation and clathrin-vesicle assembly. May be required to determine the amount of membrane to be recycled, possibly by regulating the size of the clathrin cage. Involved in AP2-dependent clathrin-mediated endocytosis at the neuromuscular junction. In Drosophila melanogaster (Fruit fly), this protein is Phosphatidylinositol-binding clathrin assembly protein LAP (lap).